We begin with the raw amino-acid sequence, 161 residues long: MSKLTHFDAGGQAHMVDVGEKAETRRVAVAHGSIRMLPATLSIITAGDAKKGDVLGIARIAAIQGSKRTAELIPLCHPIPLTRIGVEFSIDDAVSAVHCQVTAETVGRTGVEMEALTATSIALLTIYDMCKAVDRGMTIGEIRLLEKLGGKSGHWQAGNND.

Residues 75–77 (LCH) and 113–114 (ME) contribute to the substrate site. D128 is a catalytic residue.

The protein belongs to the MoaC family. In terms of assembly, homohexamer; trimer of dimers.

The enzyme catalyses (8S)-3',8-cyclo-7,8-dihydroguanosine 5'-triphosphate = cyclic pyranopterin phosphate + diphosphate. The protein operates within cofactor biosynthesis; molybdopterin biosynthesis. Catalyzes the conversion of (8S)-3',8-cyclo-7,8-dihydroguanosine 5'-triphosphate to cyclic pyranopterin monophosphate (cPMP). The sequence is that of Cyclic pyranopterin monophosphate synthase from Methylobacillus flagellatus (strain ATCC 51484 / DSM 6875 / VKM B-1610 / KT).